We begin with the raw amino-acid sequence, 353 residues long: Mitogen-activated protein kinase FUS3 (353 aa).

The Protein kinase domain occupies 13–309; the sequence is FQLKSLLGEG…AKEALEHPYL (297 aa). ATP-binding positions include 19 to 27 and lysine 42; that span reads LGEGAYGVV. Residue aspartate 137 is the Proton acceptor of the active site. Threonine 180 bears the Phosphothreonine mark. Residues 180 to 182 carry the TXY motif; that stretch reads TEY. Position 182 is a phosphotyrosine (tyrosine 182). Residue lysine 345 forms a Glycyl lysine isopeptide (Lys-Gly) (interchain with G-Cter in ubiquitin) linkage.

This sequence belongs to the protein kinase superfamily. CMGC Ser/Thr protein kinase family. MAP kinase subfamily. As to quaternary structure, in the nucleus, FUS3 forms a complex with DIG1, DIG2 and STE12. The interaction of FUS3 with STE12 depends on the presence of both DIG1 and DIG2. STE12 is lost from FUS3/DIG1/DIG2 complex after pheromone treatment. During its activation and phosphorylation, FUS3 forms a membrane-associated complex with the scaffold protein STE5, the MAPKK STE7, the MAPKKK STE11, and the G-protein beta subunit GBB/STE4; interacting directly with STE7 and STE5. The cofactor is Mg(2+). Post-translationally, dually phosphorylated on Thr-180 and Tyr-182 by STE7 in response to pheromone induction, which activates the enzyme. Activated FUS3 initiates a feedback signal, down-regulating phosphorylation of both, FUS3 and KSS1.

The protein resides in the nucleus. Its subcellular location is the cytoplasm. The protein localises to the periplasm. It catalyses the reaction L-seryl-[protein] + ATP = O-phospho-L-seryl-[protein] + ADP + H(+). It carries out the reaction L-threonyl-[protein] + ATP = O-phospho-L-threonyl-[protein] + ADP + H(+). Activated by tyrosine and threonine phosphorylation after pheromone treatment. Together with closely related KSS1, FUS3 is the final kinase in the signal transduction cascade regulating activation/repression of the mating and filamentation pathways, induced by pheromone and nitrogen/carbon limitation, respectively. Phosphorylated FUS3 activates the mating but suppresses the filamentation pathway, whereas activated KSS1 activates both pathways. Pheromone-activated FUS3 functions by inhibiting the binding of the transcriptional activator STE12 to filamentation specific genes while inducing its binding to and activity at mating specific genes. Non-activated FUS3 has a repressive effect on STE12 transcriptional activity. KSS1 can partially compensate for the lack of FUS3 but mating efficiency is reduced and the filamentation program is partially activated upon pheromone signaling. FUS3 phosphorylates STE7, STE5, FAR1, DIG1, DIG2 and STE12. The protein is Mitogen-activated protein kinase FUS3 (FUS3) of Saccharomyces cerevisiae (strain ATCC 204508 / S288c) (Baker's yeast).